We begin with the raw amino-acid sequence, 354 residues long: Phenylalanine--tRNA ligase alpha subunit (354 aa).

Glu279 is a binding site for Mg(2+).

Belongs to the class-II aminoacyl-tRNA synthetase family. Phe-tRNA synthetase alpha subunit type 1 subfamily. Tetramer of two alpha and two beta subunits. Mg(2+) is required as a cofactor.

Its subcellular location is the cytoplasm. It carries out the reaction tRNA(Phe) + L-phenylalanine + ATP = L-phenylalanyl-tRNA(Phe) + AMP + diphosphate + H(+). This Cupriavidus pinatubonensis (strain JMP 134 / LMG 1197) (Cupriavidus necator (strain JMP 134)) protein is Phenylalanine--tRNA ligase alpha subunit.